We begin with the raw amino-acid sequence, 502 residues long: Cytochrome P450 71A1 (502 aa).

Residues 7–21 (LLFLAIALTFFLLKL) traverse the membrane as a helical segment. Cysteine 443 contributes to the heme binding site.

Belongs to the cytochrome P450 family. It depends on heme as a cofactor. As to expression, mesocarp.

The protein resides in the microsome membrane. Its subcellular location is the endoplasmic reticulum membrane. Functionally, involved in the metabolism of compounds associated with the development of flavor in the ripening fruit process, possibly by acting as trans-cinnamic acid 4-hydrolase. The sequence is that of Cytochrome P450 71A1 (CYP71A1) from Persea americana (Avocado).